We begin with the raw amino-acid sequence, 223 residues long: Deoxyribose-phosphate aldolase (223 aa).

The active-site Proton donor/acceptor is the Asp-89. Lys-152 functions as the Schiff-base intermediate with acetaldehyde in the catalytic mechanism. The active-site Proton donor/acceptor is Lys-181.

Belongs to the DeoC/FbaB aldolase family. DeoC type 1 subfamily.

It localises to the cytoplasm. The catalysed reaction is 2-deoxy-D-ribose 5-phosphate = D-glyceraldehyde 3-phosphate + acetaldehyde. It functions in the pathway carbohydrate degradation; 2-deoxy-D-ribose 1-phosphate degradation; D-glyceraldehyde 3-phosphate and acetaldehyde from 2-deoxy-alpha-D-ribose 1-phosphate: step 2/2. In terms of biological role, catalyzes a reversible aldol reaction between acetaldehyde and D-glyceraldehyde 3-phosphate to generate 2-deoxy-D-ribose 5-phosphate. The protein is Deoxyribose-phosphate aldolase of Bacillus cereus (strain AH187).